Consider the following 217-residue polypeptide: Octanoyltransferase (217 aa).

The 176-residue stretch at Ser-33–Ser-208 folds into the BPL/LPL catalytic domain. Substrate-binding positions include Arg-72–His-79, Ser-139–Gly-141, and Gly-152–Ala-154. Cys-170 (acyl-thioester intermediate) is an active-site residue.

It belongs to the LipB family.

Its subcellular location is the cytoplasm. It carries out the reaction octanoyl-[ACP] + L-lysyl-[protein] = N(6)-octanoyl-L-lysyl-[protein] + holo-[ACP] + H(+). Its pathway is protein modification; protein lipoylation via endogenous pathway; protein N(6)-(lipoyl)lysine from octanoyl-[acyl-carrier-protein]: step 1/2. Its function is as follows. Catalyzes the transfer of endogenously produced octanoic acid from octanoyl-acyl-carrier-protein onto the lipoyl domains of lipoate-dependent enzymes. Lipoyl-ACP can also act as a substrate although octanoyl-ACP is likely to be the physiological substrate. This Pseudoalteromonas atlantica (strain T6c / ATCC BAA-1087) protein is Octanoyltransferase.